Consider the following 73-residue polypeptide: DNA gyrase inhibitor YacG (73 aa).

Zn(2+)-binding residues include Cys12, Cys15, Cys31, and Cys35. The tract at residues 47-73 is disordered; the sequence is DYAIPGEPIDPAEPSEDRNGAEGPPTD.

This sequence belongs to the DNA gyrase inhibitor YacG family. Interacts with GyrB. Zn(2+) serves as cofactor.

Inhibits all the catalytic activities of DNA gyrase by preventing its interaction with DNA. Acts by binding directly to the C-terminal domain of GyrB, which probably disrupts DNA binding by the gyrase. The polypeptide is DNA gyrase inhibitor YacG (Methylococcus capsulatus (strain ATCC 33009 / NCIMB 11132 / Bath)).